A 337-amino-acid polypeptide reads, in one-letter code: Prenyltransferase terC (337 aa).

Asp-111 and Asp-115 together coordinate Mg(2+).

Belongs to the FPP/GGPP synthase family. It depends on Mg(2+) as a cofactor.

Its pathway is secondary metabolite biosynthesis. In terms of biological role, prenyltransferase; part of the gene cluster that mediates the biosynthesis of terpendoles, indole-diterpene (IDT) mycotoxins including terpendole I, terpendole K, terpendole C, as well as the kinesin Eg5 inhibitor terpendole E. Terpendoles biosynthesis begins with the synthesis of geranylgeranyl diphosphate (GGPP) by a yet unidentified GGPP synthase. Condensation of indole-3-glycerol phosphate with GGPP by the prenyltransferase terC then forms 3-geranylgeranylindole (3-GGI), followed by epoxidation and cyclization of this intermediate (by the FAD-dependent monooxygeanse terM and the terpene cyclase terB) to form paspaline. The cytochrome monooxygenase terQ then hydroxylates paspalline at C-11 to yield terpendole E. The cytochrome monooxygenase terP converts terpendole E to 13-desoxyterpendole I, and terQ converts 13-desoxyterpendole I into terpendole I. TerF and terK are required for conversion of terpendole I to terpendole C which is further converted to terpendole K. This chain is Prenyltransferase terC, found in Tolypocladium album (Soil fungus).